Reading from the N-terminus, the 398-residue chain is Methionine aminopeptidase 1A (398 aa).

The residue at position 2 (alanine 2) is an N-acetylalanine. The C6H2-type zinc finger occupies 12-65 (TLSCARCEKPAHLQCPKCIDLKLPREQASFCTQECFKAAWSSHKSVHVKAQLSS). The Zn(2+) site is built by cysteine 15, cysteine 18, cysteine 26, cysteine 29, cysteine 42, cysteine 46, histidine 54, and histidine 58. Residue histidine 214 coordinates a protein. Zn(2+) is bound by residues aspartate 231, aspartate 242, and histidine 305. Histidine 312 is a binding site for a protein. Zn(2+) is bound by residues glutamate 338 and glutamate 369.

This sequence belongs to the peptidase M24A family. Methionine aminopeptidase type 1 subfamily. Associates with the 60S ribosomal subunit of the 80S translational complex. Zn(2+) is required as a cofactor. The cofactor is Co(2+). Mn(2+) serves as cofactor. It depends on Fe(2+) as a cofactor. In terms of tissue distribution, ubiquitous.

Its subcellular location is the cytoplasm. It carries out the reaction Release of N-terminal amino acids, preferentially methionine, from peptides and arylamides.. Its function is as follows. Cotranslationally removes the N-terminal methionine from nascent proteins. The N-terminal methionine is often cleaved when the second residue in the primary sequence is small and uncharged (Met-Ala-, Cys, Gly, Pro, Ser, Thr, or Val). This chain is Methionine aminopeptidase 1A (MAP1A), found in Arabidopsis thaliana (Mouse-ear cress).